Reading from the N-terminus, the 128-residue chain is 3-aminoacrylate deaminase RutC (128 aa).

The protein belongs to the RutC family. In terms of assembly, homotrimer.

It carries out the reaction (Z)-3-aminoacrylate + H2O + H(+) = 3-oxopropanoate + NH4(+). Involved in pyrimidine catabolism. Catalyzes the deamination of 3-aminoacrylate to malonic semialdehyde, a reaction that can also occur spontaneously. RutC may facilitate the reaction and modulate the metabolic fitness, rather than catalyzing essential functions. This Shigella flexneri serotype X (strain 2002017) protein is 3-aminoacrylate deaminase RutC.